Reading from the N-terminus, the 185-residue chain is Elongation factor P (185 aa).

Belongs to the elongation factor P family.

It localises to the cytoplasm. It participates in protein biosynthesis; polypeptide chain elongation. In terms of biological role, involved in peptide bond synthesis. Stimulates efficient translation and peptide-bond synthesis on native or reconstituted 70S ribosomes in vitro. Probably functions indirectly by altering the affinity of the ribosome for aminoacyl-tRNA, thus increasing their reactivity as acceptors for peptidyl transferase. In Caldicellulosiruptor saccharolyticus (strain ATCC 43494 / DSM 8903 / Tp8T 6331), this protein is Elongation factor P.